The primary structure comprises 148 residues: Proline-rich protein 13 (148 aa).

The disordered stretch occupies residues 1–148; that stretch reads MWNPNAGQPG…SSSSSSSDSD (148 aa). Composition is skewed to pro residues over residues 27–67 and 75–93; these read AHPP…PQPG and GPYP…PVNP. The segment covering 109-135 has biased composition (basic residues); sequence MQKKMKKAHKKMHKHQKHHKYHKHGKH. A compositionally biased stretch (low complexity) spans 136-148; that stretch reads SSSSSSSSSSDSD.

Its subcellular location is the nucleus. In terms of biological role, negatively regulates TSP1 expression at the level of transcription. This down-regulation was shown to reduce taxane-induced apoptosis. The chain is Proline-rich protein 13 (PRR13) from Homo sapiens (Human).